The primary structure comprises 440 residues: Thymidine phosphorylase (440 aa).

It belongs to the thymidine/pyrimidine-nucleoside phosphorylase family. As to quaternary structure, homodimer.

It carries out the reaction thymidine + phosphate = 2-deoxy-alpha-D-ribose 1-phosphate + thymine. It participates in pyrimidine metabolism; dTMP biosynthesis via salvage pathway; dTMP from thymine: step 1/2. Its function is as follows. The enzymes which catalyze the reversible phosphorolysis of pyrimidine nucleosides are involved in the degradation of these compounds and in their utilization as carbon and energy sources, or in the rescue of pyrimidine bases for nucleotide synthesis. The protein is Thymidine phosphorylase of Erwinia tasmaniensis (strain DSM 17950 / CFBP 7177 / CIP 109463 / NCPPB 4357 / Et1/99).